The sequence spans 612 residues: tRNA(Met) cytidine acetyltransferase TmcA (612 aa).

ATP contacts are provided by residues Gln-136, 161-170 (GRGKSTLLGQ), and Arg-284. Residues 319–499 (KHASELEEAL…PAAIYALPLT (181 aa)) enclose the N-acetyltransferase domain. 424–426 (IAV) provides a ligand contact to acetyl-CoA.

The protein belongs to the RNA cytidine acetyltransferase family. TmcA subfamily.

The protein resides in the cytoplasm. The catalysed reaction is cytidine(34) in elongator tRNA(Met) + acetyl-CoA + ATP + H2O = N(4)-acetylcytidine(34) in elongator tRNA(Met) + ADP + phosphate + CoA + H(+). Its function is as follows. Catalyzes the formation of N(4)-acetylcytidine (ac(4)C) at the wobble position of tRNA(Met), by using acetyl-CoA as an acetyl donor and ATP (or GTP). The polypeptide is tRNA(Met) cytidine acetyltransferase TmcA (Idiomarina loihiensis (strain ATCC BAA-735 / DSM 15497 / L2-TR)).